The sequence spans 463 residues: MNFPRIVIAGISSSSGKTTISSGITAALTKRGHKVAAYKCGPDYIDPGYLTLAADNPCHNLDSWMLGKDAMTEVFFHGLKNREIALVEGVMGLYDGYSGERPGGSTAEIARLLSAPVILLLNISHMAESAAAIVLGYKNLDPRINIAGVILNQAGSLRHYEICRKAIEKYTSTPVVGYLLRNKELAIPERHLGLKTTSEGGELASFIQNLAAHIESTIDIDRILNIARNAPPLPERPCPYLFPETPARPVTRIAIARDEAFSFYYQANLDMLSDWGAELCYFSPVHDTCLPENIGGIYIGGGFPEIMAAELSANQAMKTALTKAAEDGMPIYAECGGLMYLSEAIEDFDNNKYLMLGLLPGVSVMQKKLHRLGYTRAAVQNDNILSGKGTELRGHIFHWSKLPSPKTKPAYTLLEPAEYAGQNEGFIIGNSTNVLASYLHLHFGTNPDLAKNFIRVSKGFYAI.

The GATase cobBQ-type domain occupies 252-448 (RIAIARDEAF…LHLHFGTNPD (197 aa)). Cys335 serves as the catalytic Nucleophile.

This sequence belongs to the CobB/CbiA family. It depends on Mg(2+) as a cofactor.

The enzyme catalyses cob(II)yrinate + 2 L-glutamine + 2 ATP + 2 H2O = cob(II)yrinate a,c diamide + 2 L-glutamate + 2 ADP + 2 phosphate + 2 H(+). In terms of biological role, catalyzes the ATP-dependent amidation of the two carboxylate groups at positions a and c of cobyrinate, using either L-glutamine or ammonia as the nitrogen source. This is Cobyrinate a,c-diamide synthase (cbiA) from Dehalococcoides mccartyi (strain ATCC BAA-2266 / KCTC 15142 / 195) (Dehalococcoides ethenogenes (strain 195)).